A 421-amino-acid polypeptide reads, in one-letter code: Leucine-rich repeat-containing protein 42 (421 aa).

LRR repeat units follow at residues 149–170 (VLCSLCLRNRYLVVAEKLEEIK), 174–195 (ELTRLDLSCCWLGDEHELLEHL), 202–222 (SVTQLHLKDNCLSDAGIRKMT), 234–255 (NLTLLDLSCNPEITDAGIGYLF), and 259–280 (KLNCLDISGTGLKDIKAVKDKL). The segment at 374 to 406 (HEPLLSQESKKSKKRAFEESEQEQSSPQSAKQK) is disordered. Residue serine 399 is modified to Phosphoserine.

This sequence belongs to the LRRC42 family.

This is Leucine-rich repeat-containing protein 42 (Lrrc42) from Rattus norvegicus (Rat).